Consider the following 123-residue polypeptide: Small ribosomal subunit protein uS11 (123 aa).

This sequence belongs to the universal ribosomal protein uS11 family. In terms of assembly, part of the 30S ribosomal subunit. Interacts with proteins S7 and S18. Binds to IF-3.

Its function is as follows. Located on the platform of the 30S subunit, it bridges several disparate RNA helices of the 16S rRNA. Forms part of the Shine-Dalgarno cleft in the 70S ribosome. The sequence is that of Small ribosomal subunit protein uS11 from Coxiella burnetii (strain CbuK_Q154) (Coxiella burnetii (strain Q154)).